Consider the following 578-residue polypeptide: Moesin/ezrin/radixin homolog 1 (578 aa).

Residues 1–296 form the FERM domain; that stretch reads MSPKALNVRV…GNHELYMRRR (296 aa). The disordered stretch occupies residues 463-555; it reads ASTTPQHHHV…HRENVRQGRD (93 aa). Over residues 475 to 484 the composition is skewed to acidic residues; that stretch reads DENENEEELT. Positions 492–555 are enriched in basic and acidic residues; the sequence is VSRDLDTDEH…HRENVRQGRD (64 aa). A Phosphothreonine modification is found at Thr559.

Interacts with wgn. Interacts with Mer and arm at the adherens junction. Interacts with cytoskeletal actin at apical buds of microvilli in the precellularised embryo. Interacts with PCID2 (possibly via FERM domain). In terms of processing, phosphorylated on Thr-559. In the oocyte this phosphorylation is induced by phosphatidylinositol 4,5-bisphosphate (PtdIns[4,5]P(2)) generated by sktl.

The protein localises to the cell junction. It localises to the adherens junction. The protein resides in the cell projection. Its subcellular location is the microvillus. It is found in the rhabdomere. The protein localises to the cell membrane. It localises to the cytoplasm. The protein resides in the cytoskeleton. Its subcellular location is the cell cortex. It is found in the cilium. The protein localises to the flagellum. It localises to the nucleus. The protein resides in the nucleoplasm. Its subcellular location is the chromosome. In terms of biological role, involved in connections of major cytoskeletal structures to the plasma membrane. Together with wgn, involved in control of axon targeting of R8 and R2-R5 photoreceptors, independent of egr. In the nucleus, recruited to sites of active transcription by RNA polymerase II where it has a role in nuclear mRNA export together with the mRNA export factor PCID2 and other messenger ribonucleoprotein (mRNP) particles. The protein is Moesin/ezrin/radixin homolog 1 (Moe) of Drosophila melanogaster (Fruit fly).